A 709-amino-acid chain; its full sequence is Probable lanosterol 14-alpha demethylase (709 aa).

Cys425 contacts heme.

This sequence belongs to the cytochrome P450 family. Requires heme as cofactor.

The protein resides in the membrane. The catalysed reaction is a 14alpha-methyl steroid + 3 reduced [NADPH--hemoprotein reductase] + 3 O2 = a Delta(14) steroid + formate + 3 oxidized [NADPH--hemoprotein reductase] + 4 H2O + 4 H(+). Its pathway is steroid biosynthesis; zymosterol biosynthesis; zymosterol from lanosterol: step 1/6. Catalyzes the 14-alpha demethylation of obtusifoliol to 4 alpha-methyl-5 alpha-ergosta-8,14,24(28)-trien-3 beta-ol. The polypeptide is Probable lanosterol 14-alpha demethylase (Acanthamoeba polyphaga (Amoeba)).